Reading from the N-terminus, the 72-residue chain is Translation initiation factor IF-1 (72 aa).

Residues M1–R72 form the S1-like domain.

Belongs to the IF-1 family. Component of the 30S ribosomal translation pre-initiation complex which assembles on the 30S ribosome in the order IF-2 and IF-3, IF-1 and N-formylmethionyl-tRNA(fMet); mRNA recruitment can occur at any time during PIC assembly.

It is found in the cytoplasm. In terms of biological role, one of the essential components for the initiation of protein synthesis. Stabilizes the binding of IF-2 and IF-3 on the 30S subunit to which N-formylmethionyl-tRNA(fMet) subsequently binds. Helps modulate mRNA selection, yielding the 30S pre-initiation complex (PIC). Upon addition of the 50S ribosomal subunit IF-1, IF-2 and IF-3 are released leaving the mature 70S translation initiation complex. This chain is Translation initiation factor IF-1, found in Treponema pallidum (strain Nichols).